A 134-amino-acid chain; its full sequence is D-ribose pyranase (134 aa).

His-20 functions as the Proton donor in the catalytic mechanism. Residues Asp-28, His-99, and Tyr-123–Asn-125 contribute to the substrate site.

The protein belongs to the RbsD / FucU family. RbsD subfamily. In terms of assembly, homodecamer.

The protein localises to the cytoplasm. The enzyme catalyses beta-D-ribopyranose = beta-D-ribofuranose. It participates in carbohydrate metabolism; D-ribose degradation; D-ribose 5-phosphate from beta-D-ribopyranose: step 1/2. Catalyzes the interconversion of beta-pyran and beta-furan forms of D-ribose. In Staphylococcus aureus (strain Mu3 / ATCC 700698), this protein is D-ribose pyranase.